The following is a 216-amino-acid chain: Large ribosomal subunit protein uL1 (216 aa).

Belongs to the universal ribosomal protein uL1 family.

This Caenorhabditis elegans protein is Large ribosomal subunit protein uL1.